Here is a 427-residue protein sequence, read N- to C-terminus: Enolase (427 aa).

(2R)-2-phosphoglycerate is bound at residue Gln-163. Glu-205 acts as the Proton donor in catalysis. Asp-242, Glu-285, and Asp-312 together coordinate Mg(2+). (2R)-2-phosphoglycerate-binding residues include Lys-337, Arg-366, Ser-367, and Lys-388. Lys-337 serves as the catalytic Proton acceptor.

Belongs to the enolase family. Requires Mg(2+) as cofactor.

It is found in the cytoplasm. The protein localises to the secreted. The protein resides in the cell surface. The enzyme catalyses (2R)-2-phosphoglycerate = phosphoenolpyruvate + H2O. It participates in carbohydrate degradation; glycolysis; pyruvate from D-glyceraldehyde 3-phosphate: step 4/5. Functionally, catalyzes the reversible conversion of 2-phosphoglycerate (2-PG) into phosphoenolpyruvate (PEP). It is essential for the degradation of carbohydrates via glycolysis. The polypeptide is Enolase (Paraburkholderia phymatum (strain DSM 17167 / CIP 108236 / LMG 21445 / STM815) (Burkholderia phymatum)).